Reading from the N-terminus, the 742-residue chain is Probable serine/threonine-protein kinase PkwA (742 aa).

The Protein kinase domain maps to 16–266; the sequence is YRLVSRLGAG…TAELLAQLST (251 aa). ATP-binding positions include 22 to 30 and K44; that span reads LGAGGMGQV. D138 serves as the catalytic Proton acceptor. The segment at 266 to 394 is disordered; it reads TDHTGDDWPP…PWSPPRVQPP (129 aa). Over residues 301–318 the composition is skewed to pro residues; it reads EPPPPSHGPPRPSEPLPD. The span at 343 to 356 shows a compositional bias: basic and acidic residues; sequence LEEKPIQVIHEPER. Residues 377–392 are compositionally biased toward pro residues; the sequence is PRPAAPQPPWSPPRVQ. WD repeat units follow at residues 455 to 496, 497 to 538, 539 to 580, 581 to 621, 622 to 663, 664 to 705, and 706 to 742; these read ILTT…ELHT, LEGH…ERAV, FEGH…EHAV, LKGH…KERD, VLQA…ALHT, FEGH…EHTT, and LEGH…IATE.

It belongs to the protein kinase superfamily. Ser/Thr protein kinase family.

It carries out the reaction L-seryl-[protein] + ATP = O-phospho-L-seryl-[protein] + ADP + H(+). The catalysed reaction is L-threonyl-[protein] + ATP = O-phospho-L-threonyl-[protein] + ADP + H(+). In terms of biological role, may play a regulatory role during the complex growth cycle and in secondary metabolite production. The chain is Probable serine/threonine-protein kinase PkwA (pkwA) from Thermomonospora curvata.